An 821-amino-acid polypeptide reads, in one-letter code: Probable E3 ubiquitin-protein ligase hulA (821 aa).

Positions 1–112 (MGSNLPAQPN…QMGGDEMLTR (112 aa)) constitute a C2 domain. 2 disordered regions span residues 140-240 (PNQA…WERR) and 255-359 (RTTT…YFVD). Polar residues-rich tracts occupy residues 151–173 (AQSS…SVSP), 181–201 (AASN…PTST), 217–228 (QGSRTNLSSFED), and 255–272 (RTTT…QTQR). In terms of domain architecture, WW 1 spans 231–264 (GRLPAGWERREDNLGRTYYVDHNTRTTTWTRPSS). A compositionally biased stretch (basic and acidic residues) spans 281 to 296 (LERRAHQSRMLPEDRT). The span at 297–306 (GANSPNLQES) shows a compositional bias: polar residues. A compositionally biased stretch (low complexity) spans 311-339 (PQQAHTPPAGGSASAVSMMATGATTAGTG). WW domains lie at 339 to 372 (GELP…DPRR) and 399 to 432 (GPLP…DPRL). The 334-residue stretch at 488 to 821 (SASDLKKRLM…VEETLGFGQE (334 aa)) folds into the HECT domain. C789 functions as the Glycyl thioester intermediate in the catalytic mechanism.

The protein belongs to the RSP5/NEDD4 family. In terms of assembly, interacts with creD.

It is found in the cytoplasm. It carries out the reaction S-ubiquitinyl-[E2 ubiquitin-conjugating enzyme]-L-cysteine + [acceptor protein]-L-lysine = [E2 ubiquitin-conjugating enzyme]-L-cysteine + N(6)-ubiquitinyl-[acceptor protein]-L-lysine.. It participates in protein modification; protein ubiquitination. In terms of biological role, E3 ubiquitin-protein ligase which accepts ubiquitin from an E2 ubiquitin-conjugating enzyme in the form of a thioester and then directly transfers the ubiquitin to targeted substrates. Probably involved in the regulatory network controlling carbon source utilization. The sequence is that of Probable E3 ubiquitin-protein ligase hulA (hulA) from Aspergillus niger (strain ATCC MYA-4892 / CBS 513.88 / FGSC A1513).